Here is a 276-residue protein sequence, read N- to C-terminus: uncharacterized protein (276 aa).

The AB hydrolase-1 domain maps to 20–137; it reads PVLIFIPGAN…PPINTFLPDS (118 aa).

It belongs to the AB hydrolase superfamily.

This is an uncharacterized protein from Staphylococcus aureus (strain MRSA252).